Reading from the N-terminus, the 308-residue chain is MNWLEIAVHVCPEGIDMVSNIFDELGAGGVVIEDPALINRYIEANIWDHYEFPPEVLNRPQPIVKAYLPEGPNLENKLVLLQERLTGLPLDAVPTFERRQVAEEDWATAWMKYYKPVEIGQKLAVKPSWEDYVPEDGRIVLEMDPGMAFGCGNHPTTTMCMEYLEGIIQGGESVADVGTGTGILAITSAKLGAARVLAVDLDEVAVKVSQENVERNGVQDIVEVFHGNLLDKVESKVDVVIANIVANVIMILAPDVPRILKHGGYFITSGIIQFRAEEVRQKLEQTGFKILGRKEDGEWVSYLCILEG.

Residues T157, G178, D200, and N243 each coordinate S-adenosyl-L-methionine.

The protein belongs to the methyltransferase superfamily. PrmA family.

Its subcellular location is the cytoplasm. The catalysed reaction is L-lysyl-[protein] + 3 S-adenosyl-L-methionine = N(6),N(6),N(6)-trimethyl-L-lysyl-[protein] + 3 S-adenosyl-L-homocysteine + 3 H(+). Its function is as follows. Methylates ribosomal protein L11. The sequence is that of Ribosomal protein L11 methyltransferase from Desulforamulus reducens (strain ATCC BAA-1160 / DSM 100696 / MI-1) (Desulfotomaculum reducens).